We begin with the raw amino-acid sequence, 230 residues long: Phosphoribosylformylglycinamidine synthase subunit PurQ (230 aa).

Residues Ser3–Ser230 enclose the Glutamine amidotransferase type-1 domain. Cys87 (nucleophile) is an active-site residue. Active-site residues include His204 and Glu206.

Part of the FGAM synthase complex composed of 1 PurL, 1 PurQ and 2 PurS subunits.

It is found in the cytoplasm. It carries out the reaction N(2)-formyl-N(1)-(5-phospho-beta-D-ribosyl)glycinamide + L-glutamine + ATP + H2O = 2-formamido-N(1)-(5-O-phospho-beta-D-ribosyl)acetamidine + L-glutamate + ADP + phosphate + H(+). It catalyses the reaction L-glutamine + H2O = L-glutamate + NH4(+). The protein operates within purine metabolism; IMP biosynthesis via de novo pathway; 5-amino-1-(5-phospho-D-ribosyl)imidazole from N(2)-formyl-N(1)-(5-phospho-D-ribosyl)glycinamide: step 1/2. Its function is as follows. Part of the phosphoribosylformylglycinamidine synthase complex involved in the purines biosynthetic pathway. Catalyzes the ATP-dependent conversion of formylglycinamide ribonucleotide (FGAR) and glutamine to yield formylglycinamidine ribonucleotide (FGAM) and glutamate. The FGAM synthase complex is composed of three subunits. PurQ produces an ammonia molecule by converting glutamine to glutamate. PurL transfers the ammonia molecule to FGAR to form FGAM in an ATP-dependent manner. PurS interacts with PurQ and PurL and is thought to assist in the transfer of the ammonia molecule from PurQ to PurL. In Rhodospirillum rubrum (strain ATCC 11170 / ATH 1.1.1 / DSM 467 / LMG 4362 / NCIMB 8255 / S1), this protein is Phosphoribosylformylglycinamidine synthase subunit PurQ.